Consider the following 226-residue polypeptide: MNPIVINRLQRKLGYTFQQQELLLQALTHRSASSKHNERLEFLGDSILSFVIANALFQRFPRVDEGDMSRMRATLVRGNTLAEMGREFDLGECLRLGPGELKSGGFRRESILADTVEALIGGVFLDSDIQTVERLILDWYRSRLDEISPGDKQKDPKTRLQEFLQGRHLPLPSYLVVQVRGEAHDQEFTIHCQVSGLSEPVVGTGSSRRKAEQAAAEQALIKLELE.

The region spanning 6 to 128 is the RNase III domain; that stretch reads INRLQRKLGY…LIGGVFLDSD (123 aa). E41 contributes to the Mg(2+) binding site. D45 is an active-site residue. Mg(2+) is bound by residues D114 and E117. E117 is a catalytic residue. Positions 155 to 225 constitute a DRBM domain; it reads DPKTRLQEFL…AEQALIKLEL (71 aa).

Belongs to the ribonuclease III family. Homodimer. The cofactor is Mg(2+).

Its subcellular location is the cytoplasm. It catalyses the reaction Endonucleolytic cleavage to 5'-phosphomonoester.. Digests double-stranded RNA. Involved in the processing of primary rRNA transcript to yield the immediate precursors to the large and small rRNAs (23S and 16S). Processes some mRNAs, and tRNAs when they are encoded in the rRNA operon. Processes pre-crRNA and tracrRNA of type II CRISPR loci if present in the organism. The polypeptide is Ribonuclease 3 (Serratia proteamaculans (strain 568)).